The primary structure comprises 303 residues: Putative ring-cleaving dioxygenase MhqE (303 aa).

VOC domains follow at residues Gly5 to Asp129 and Gly150 to Asp266. 3 residues coordinate Fe cation: His8, His215, and Glu262.

This sequence belongs to the extradiol ring-cleavage dioxygenase family. Fe(2+) serves as cofactor.

It localises to the cytoplasm. Functionally, putative ring-cleavage dioxygenase that may contribute to the degradation of aromatic compounds. The polypeptide is Putative ring-cleaving dioxygenase MhqE (mhqE) (Bacillus subtilis (strain 168)).